We begin with the raw amino-acid sequence, 654 residues long: Periplasmic beta-glucosidase/beta-xylosidase (654 aa).

The N-terminal stretch at 1–25 (MEKSATRQKALLIALPLLFSPLASA) is a signal peptide. Residues Asp235 and Asp360 contribute to the active site.

Belongs to the glycosyl hydrolase 3 family.

It is found in the periplasm. It catalyses the reaction Hydrolysis of terminal, non-reducing beta-D-glucosyl residues with release of beta-D-glucose.. It carries out the reaction Hydrolysis of (1-&gt;4)-beta-D-xylans, to remove successive D-xylose residues from the non-reducing termini.. Exhibits both beta-glucosidase and beta-xylosidase activities. The polypeptide is Periplasmic beta-glucosidase/beta-xylosidase (bgxA) (Dickeya chrysanthemi (Pectobacterium chrysanthemi)).